A 631-amino-acid chain; its full sequence is 30-kDa cleavage and polyadenylation specificity factor 30 (631 aa).

Residues 12 to 38 (EGGLDSGPVQNTASVPVAPPENSSSAA) form a disordered region. C3H1-type zinc fingers lie at residues 60–87 (SFRQ…HQFD), 88–112 (KARM…VYKH), and 114–141 (NEDI…HAKL). Residues 179-234 (QDRPQGQVPMQGQPQESGNLQQQQQQQPQQSQHQVSQTLIPNPADQTNRTSHPLPQ) are disordered. The span at 182 to 215 (PQGQVPMQGQPQESGNLQQQQQQQPQQSQHQVSQ) shows a compositional bias: low complexity. The span at 216 to 231 (TLIPNPADQTNRTSHP) shows a compositional bias: polar residues. The 136-residue stretch at 237 to 372 (NRYFVVKSNN…SVGEQLASLL (136 aa)) folds into the YTH domain. Over residues 392–407 (EEEKAKGVNPESRAEN) the composition is skewed to basic and acidic residues. Disordered regions lie at residues 392 to 447 (EEEK…RGIM) and 541 to 631 (PHMG…KKRR). A compositionally biased stretch (acidic residues) spans 412 to 432 (PFEDNEEEEEEEDESEEEEES). Residues 573–583 (KTPERSDERGV) show a composition bias toward basic and acidic residues. Phosphoserine occurs at positions 610 and 612. A compositionally biased stretch (basic residues) spans 621–631 (RSRHGEGKKRR).

Belongs to the CPSF4/YTH1 family. In terms of assembly, component of the cleavage and polyadenylation specificity factor (CPSF) complex. Can form homodimers. Binds to calmodulin. Forms a complex with cleavage and polyadenylation specificity factor (CPSF) subunits CPSF73-I, CPSF73-II, CPSF100, CPSF160, CFIS2, FIPS3, FIPS5, PAPS2, PAPS3, CLPS3, PCFS1, PCFS4, CSTF50 and CSTF77. Expressed in seedlings, roots, leaves, siliques, stems and flowers.

It localises to the nucleus. It is found in the cytoplasm. Endonuclease activity is repressed by the N-terminal domain of FIPS5. Nuclease activity is inhibited by zinc (&gt;100 uM), cadmium in a progressive manner (50 percent activity at 1 mM Cd(2+)), and high salt levels (e.g. KCl or NaCl &gt;600 mM). Stimulated by ATP in the presence of Zn(2+), even at inhibitory zinc concentrations. Elevated temperatures prevent RNA-binding at 55 degrees Celsius, but endonuclease activity at 70 degrees Celsius. The sulfhydryl reagent dithiothreitol (DTT) inhibits both RNA-binding and nuclease activities. Functionally, component of the cleavage and polyadenylation specificity factor (CPSF) complex that play a key role in pre-mRNA 3'-end formation. May interact with poly(A) polymerase and other factors to bring about cleavage and poly(A) addition. Mediates poly(A) site selection. Binds RNA in a calcium-dependent manner. Exhibits endonuclease activity with an ability to nick and degrade linear as well as circular single-stranded RNA that leaves RNA 3' ends with hydroxyl groups, thus mediating processing of the pre-mRNA as a prelude to the polyadenylation. Involved in the post-transcriptional control, probably via poly(A) addition, of the responses of plants to stress, especially genes mediating tolerance to oxidative stress. Plays a role in the regulation of salicylic acid (SA) production via the control of messenger RNA 3' end processing, thus being a key component of programmed cell death and plant immune responses required for resistance to virulent Pseudomonas syringae pv tomato DC3000 (Pst). The polypeptide is 30-kDa cleavage and polyadenylation specificity factor 30 (Arabidopsis thaliana (Mouse-ear cress)).